A 490-amino-acid polypeptide reads, in one-letter code: Colicin-5 (490 aa).

A compositionally biased stretch (polar residues) spans 1 to 20 (MDKVTDNSPDVESTESTEGS). Disordered stretches follow at residues 1–29 (MDKVTDNSPDVESTESTEGSFPTVGVDTG) and 146–171 (QKAREEAEAAEKALREAERQRDEIAR). Residues 146–170 (QKAREEAEAAEKALREAERQRDEIA) show a composition bias toward basic and acidic residues. Residues 447-467 (IVALMFSFIVGVPLGFWGIAI) form a helical membrane-spanning segment.

This sequence belongs to the channel forming colicin family.

It localises to the host membrane. Its function is as follows. This colicin is a channel-forming colicin. This class of transmembrane toxins depolarize the cytoplasmic membrane, leading to dissipation of cellular energy. In terms of biological role, colicins are polypeptide toxins produced by and active against E.coli and closely related bacteria. The sequence is that of Colicin-5 (cfa) from Escherichia coli.